The following is a 201-amino-acid chain: dITP/XTP pyrophosphatase (201 aa).

Position 8 to 13 (8 to 13 (TTNENK)) interacts with substrate. Aspartate 68 serves as the catalytic Proton acceptor. Aspartate 68 lines the Mg(2+) pocket. Residues serine 69, 155 to 158 (FGYD), lysine 177, and 182 to 183 (HR) contribute to the substrate site.

It belongs to the HAM1 NTPase family. Homodimer. It depends on Mg(2+) as a cofactor.

The enzyme catalyses XTP + H2O = XMP + diphosphate + H(+). The catalysed reaction is dITP + H2O = dIMP + diphosphate + H(+). It carries out the reaction ITP + H2O = IMP + diphosphate + H(+). Pyrophosphatase that catalyzes the hydrolysis of nucleoside triphosphates to their monophosphate derivatives, with a high preference for the non-canonical purine nucleotides XTP (xanthosine triphosphate), dITP (deoxyinosine triphosphate) and ITP. Seems to function as a house-cleaning enzyme that removes non-canonical purine nucleotides from the nucleotide pool, thus preventing their incorporation into DNA/RNA and avoiding chromosomal lesions. This chain is dITP/XTP pyrophosphatase, found in Borreliella burgdorferi (strain ATCC 35210 / DSM 4680 / CIP 102532 / B31) (Borrelia burgdorferi).